A 129-amino-acid polypeptide reads, in one-letter code: Fluoride-specific ion channel FluC (129 aa).

A run of 4 helical transmembrane segments spans residues 8–28, 36–56, 71–91, and 103–123; these read FFCVAVGGAIGASARFAMVLA, AFPFATLTVNIIGSFFLGLLL, FLGVGLLGAFTTFSTFSVEVV, and ALHIAFNVIICIAAVFAAMML. Na(+)-binding residues include glycine 78 and threonine 81.

It belongs to the fluoride channel Fluc/FEX (TC 1.A.43) family.

It is found in the cell inner membrane. It catalyses the reaction fluoride(in) = fluoride(out). Na(+) is not transported, but it plays an essential structural role and its presence is essential for fluoride channel function. Its function is as follows. Fluoride-specific ion channel. Important for reducing fluoride concentration in the cell, thus reducing its toxicity. The sequence is that of Fluoride-specific ion channel FluC from Idiomarina loihiensis (strain ATCC BAA-735 / DSM 15497 / L2-TR).